The following is a 405-amino-acid chain: MASQPPPPPKPWESRRIPGAGPGPGSGPGPTYQSADLGPTLLTRPGQPTLTRVPPPILPRPSQQTGSNNVNTFRPAYSSFSSGYGAYGNSFYGSYSPYSYGYNGLGFNRLRVDDLPPSRFVQQAEESSRGAFQSIESIVHAFASVSMMMDATFSAVYNSFRAVLDVANHFSRLKIHFTKVFSAFALVRTIRYLYRRLQWMMGLRRGSENEDLWAESEGTVACLSAEDQATNSAKSWPIFLFFAVILGGPYLIWKLLSTHNDEVTDNTNWASGEDDHVVARAEYDFVAVSDEEISFRAGDMLNLALKEQQPKVRGWLLASLDGQTTGLIPANYVKILGKRRGRKTIESSTMLKQQQSFTNPTLIKGVTTTNPLDEQEAAFESVFVETNKVSSAPDSTGKNGDKQDL.

A compositionally biased stretch (pro residues) spans 1–11 (MASQPPPPPKP). A disordered region spans residues 1 to 71 (MASQPPPPPK…SQQTGSNNVN (71 aa)). The Peroxisomal matrix segment spans residues 1–136 (MASQPPPPPK…SSRGAFQSIE (136 aa)). The segment covering 61-71 (PSQQTGSNNVN) has biased composition (polar residues). Residues 137-157 (SIVHAFASVSMMMDATFSAVY) form a helical membrane-spanning segment. The interval 147–235 (MMMDATFSAV…EDQATNSAKS (89 aa)) is targeting to peroxisomes. At 158 to 176 (NSFRAVLDVANHFSRLKIH) the chain is on the cytoplasmic side. A helical membrane pass occupies residues 177–194 (FTKVFSAFALVRTIRYLY). The interval 177–198 (FTKVFSAFALVRTIRYLYRRLQ) is interaction with PEX19. Residues 195–235 (RRLQWMMGLRRGSENEDLWAESEGTVACLSAEDQATNSAKS) lie on the Peroxisomal matrix side of the membrane. A helical transmembrane segment spans residues 236-256 (WPIFLFFAVILGGPYLIWKLL). The Cytoplasmic segment spans residues 257 to 405 (STHNDEVTDN…TGKNGDKQDL (149 aa)). An SH3 domain is found at 274–338 (DDHVVARAEY…PANYVKILGK (65 aa)). A Phosphoserine modification is found at Ser-356.

The protein belongs to the peroxin-13 family. As to quaternary structure, interacts (via SH3 domain) with PEX14 (via SH3-binding motif); forming the PEX13-PEX14 docking complex. Interacts with PEX19.

The protein localises to the peroxisome membrane. In terms of biological role, component of the PEX13-PEX14 docking complex, a translocon channel that specifically mediates the import of peroxisomal cargo proteins bound to PEX5 receptor. The PEX13-PEX14 docking complex forms a large import pore which can be opened to a diameter of about 9 nm. Mechanistically, PEX5 receptor along with cargo proteins associates with the PEX14 subunit of the PEX13-PEX14 docking complex in the cytosol, leading to the insertion of the receptor into the organelle membrane with the concomitant translocation of the cargo into the peroxisome matrix. Involved in the import of PTS1- and PTS2-type containing proteins. This chain is Peroxisomal membrane protein PEX13, found in Mus musculus (Mouse).